The following is a 166-amino-acid chain: Crossover junction endodeoxyribonuclease RuvC (166 aa).

Residues D7, E70, and H143 contribute to the active site. Mg(2+) contacts are provided by D7, E70, and H143.

The protein belongs to the RuvC family. Homodimer which binds Holliday junction (HJ) DNA. The HJ becomes 2-fold symmetrical on binding to RuvC with unstacked arms; it has a different conformation from HJ DNA in complex with RuvA. In the full resolvosome a probable DNA-RuvA(4)-RuvB(12)-RuvC(2) complex forms which resolves the HJ. The cofactor is Mg(2+).

Its subcellular location is the cytoplasm. It carries out the reaction Endonucleolytic cleavage at a junction such as a reciprocal single-stranded crossover between two homologous DNA duplexes (Holliday junction).. Functionally, the RuvA-RuvB-RuvC complex processes Holliday junction (HJ) DNA during genetic recombination and DNA repair. Endonuclease that resolves HJ intermediates. Cleaves cruciform DNA by making single-stranded nicks across the HJ at symmetrical positions within the homologous arms, yielding a 5'-phosphate and a 3'-hydroxyl group; requires a central core of homology in the junction. The consensus cleavage sequence is 5'-(A/T)TT(C/G)-3'. Cleavage occurs on the 3'-side of the TT dinucleotide at the point of strand exchange. HJ branch migration catalyzed by RuvA-RuvB allows RuvC to scan DNA until it finds its consensus sequence, where it cleaves and resolves the cruciform DNA. The protein is Crossover junction endodeoxyribonuclease RuvC of Thermus thermophilus (strain ATCC BAA-163 / DSM 7039 / HB27).